Consider the following 240-residue polypeptide: 3-deoxy-D-manno-octulosonic acid kinase (240 aa).

Residue D170 is part of the active site.

It belongs to the protein kinase superfamily. KdkA/RfaP family.

The protein resides in the cell inner membrane. It carries out the reaction an alpha-Kdo-(2-&gt;6)-lipid IVA + ATP = a 4-O-phospho-alpha-Kdo-(2-&gt;6)-lipid IVA + ADP + H(+). Its pathway is bacterial outer membrane biogenesis; LPS core biosynthesis. Its function is as follows. Catalyzes the ATP-dependent phosphorylation of the 3-deoxy-D-manno-octulosonic acid (Kdo) residue in Kdo-lipid IV(A) at the 4-OH position. The polypeptide is 3-deoxy-D-manno-octulosonic acid kinase (Actinobacillus succinogenes (strain ATCC 55618 / DSM 22257 / CCUG 43843 / 130Z)).